A 379-amino-acid chain; its full sequence is Queuine tRNA-ribosyltransferase (379 aa).

Catalysis depends on D94, which acts as the Proton acceptor. Substrate-binding positions include 94 to 98 (DSGGF), D148, Q191, and G218. Positions 249 to 255 (GVGSPDA) are RNA binding. D268 serves as the catalytic Nucleophile. Residues 273–277 (TRIAR) are RNA binding; important for wobble base 34 recognition. Zn(2+) contacts are provided by C306, C308, C311, and H337.

The protein belongs to the queuine tRNA-ribosyltransferase family. In terms of assembly, homodimer. Within each dimer, one monomer is responsible for RNA recognition and catalysis, while the other monomer binds to the replacement base PreQ1. It depends on Zn(2+) as a cofactor.

It carries out the reaction 7-aminomethyl-7-carbaguanine + guanosine(34) in tRNA = 7-aminomethyl-7-carbaguanosine(34) in tRNA + guanine. It functions in the pathway tRNA modification; tRNA-queuosine biosynthesis. In terms of biological role, catalyzes the base-exchange of a guanine (G) residue with the queuine precursor 7-aminomethyl-7-deazaguanine (PreQ1) at position 34 (anticodon wobble position) in tRNAs with GU(N) anticodons (tRNA-Asp, -Asn, -His and -Tyr). Catalysis occurs through a double-displacement mechanism. The nucleophile active site attacks the C1' of nucleotide 34 to detach the guanine base from the RNA, forming a covalent enzyme-RNA intermediate. The proton acceptor active site deprotonates the incoming PreQ1, allowing a nucleophilic attack on the C1' of the ribose to form the product. After dissociation, two additional enzymatic reactions on the tRNA convert PreQ1 to queuine (Q), resulting in the hypermodified nucleoside queuosine (7-(((4,5-cis-dihydroxy-2-cyclopenten-1-yl)amino)methyl)-7-deazaguanosine). The protein is Queuine tRNA-ribosyltransferase of Oceanobacillus iheyensis (strain DSM 14371 / CIP 107618 / JCM 11309 / KCTC 3954 / HTE831).